The chain runs to 312 residues: Isethionate sulfite-lyase activating enzyme (312 aa).

The Radical SAM core domain maps to 20 to 304; that stretch reads HDGPGIRTIV…GLQKTALDIL (285 aa). Positions 34, 38, 41, 60, 66, 69, 73, 93, 96, 100, and 104 each coordinate [4Fe-4S] cluster. 40–42 serves as a coordination point for S-adenosyl-L-methionine; it reads WCS. 2 consecutive 4Fe-4S ferredoxin-type domains span residues 51–83 and 84–115; these read AELA…CGDD and DKPR…YGKK. Residues Gly-144, 193 to 195, and His-267 each bind S-adenosyl-L-methionine; that span reads DIK.

Belongs to the organic radical-activating enzymes family. Monomer. Requires [4Fe-4S] cluster as cofactor.

It carries out the reaction glycyl-[protein] + reduced [flavodoxin] + S-adenosyl-L-methionine = glycin-2-yl radical-[protein] + semiquinone [flavodoxin] + 5'-deoxyadenosine + L-methionine + H(+). It participates in organosulfur degradation; alkanesulfonate degradation. In terms of biological role, involved in an anaerobic respiration pathway that converts the sulfonate isethionate (2-hydroxyethanesulfonate) to ammonia, acetate and sulfide. Catalyzes activation of the isethionate sulfite-lyase IslA under anaerobic conditions by generation of an organic free radical on a glycine residue, via a homolytic cleavage of S-adenosyl-L-methionine (SAM). This Desulfovibrio desulfuricans (strain ATCC 27774 / DSM 6949 / MB) protein is Isethionate sulfite-lyase activating enzyme.